The chain runs to 314 residues: tRNA dimethylallyltransferase (314 aa).

13 to 20 (GPTAIGKT) is a binding site for ATP. 15–20 (TAIGKT) is a binding site for substrate. The tract at residues 38 to 41 (DSMQ) is interaction with substrate tRNA.

This sequence belongs to the IPP transferase family. In terms of assembly, monomer. Mg(2+) serves as cofactor.

It carries out the reaction adenosine(37) in tRNA + dimethylallyl diphosphate = N(6)-dimethylallyladenosine(37) in tRNA + diphosphate. Catalyzes the transfer of a dimethylallyl group onto the adenine at position 37 in tRNAs that read codons beginning with uridine, leading to the formation of N6-(dimethylallyl)adenosine (i(6)A). This Desulfotalea psychrophila (strain LSv54 / DSM 12343) protein is tRNA dimethylallyltransferase.